A 496-amino-acid chain; its full sequence is MYKTKIICFLLGILSGLVFAPTFFIPALFTFSYLCYIVQKSQNWQAAAKFGYLFGFGHFLSGMYWISIGVSVYIADFWWAIPFALFGLPIILAFFISTNCTLSFFAKNNKYYQLIFCLLWVLFEWIRSWICTGLPWNLIGYAFSFSEILIQPLSITGIYGLSFIVIYIATSAYPVFSKNFTKLKILLASSMLILTVMVIYGAMRVSTNPTHFTDIKVRLVQPSIPQTAKWDEEEFWHNLMLHINLSEKLEPTDLIIWSEAALVVPDDIPQVKLELLNMLNSTNAILITGGISDNKKHGDKFELYSAMYALDKNNHKLFEYHKSHLVPFGEYMPLKKILPFKKLTHGLIDYKEGNGGLVYIKKYHLKIKPLICYESIFPNFVQTNNEIADVIINITNDSWYGKSSGPYQHFHISRSRAVENGLPMIRVANNGISAIVDPVGRIVKKLNLNEINYIQGLIPQKLTTPTIFSQFGNFAMLLPIVFILLIHYLLSLIFDD.

Transmembrane regions (helical) follow at residues 6–26, 50–70, 77–97, 114–134, 148–168, and 183–203; these read IICF…FFIP, FGYL…SIGV, FWWA…FFIS, LIFC…CTGL, ILIQ…VIYI, and LKIL…YGAM. Residues 220 to 464 enclose the CN hydrolase domain; it reads VQPSIPQTAK…QGLIPQKLTT (245 aa). The active-site Proton acceptor is glutamate 259. Lysine 322 is a catalytic residue. Cysteine 372 serves as the catalytic Nucleophile. The helical transmembrane segment at 474–494 threads the bilayer; that stretch reads FAMLLPIVFILLIHYLLSLIF.

It belongs to the CN hydrolase family. Apolipoprotein N-acyltransferase subfamily.

It is found in the cell inner membrane. The catalysed reaction is N-terminal S-1,2-diacyl-sn-glyceryl-L-cysteinyl-[lipoprotein] + a glycerophospholipid = N-acyl-S-1,2-diacyl-sn-glyceryl-L-cysteinyl-[lipoprotein] + a 2-acyl-sn-glycero-3-phospholipid + H(+). Its pathway is protein modification; lipoprotein biosynthesis (N-acyl transfer). Functionally, catalyzes the phospholipid dependent N-acylation of the N-terminal cysteine of apolipoprotein, the last step in lipoprotein maturation. The polypeptide is Apolipoprotein N-acyltransferase (Rickettsia typhi (strain ATCC VR-144 / Wilmington)).